Here is a 324-residue protein sequence, read N- to C-terminus: Putative transcription factor sel-7 (324 aa).

Residues 67 to 85 show a composition bias toward polar residues; that stretch reads SPPQTVISEAPPQSFTPSA. Residues 67 to 151 are disordered; that stretch reads SPPQTVISEA…DEKVLADGPF (85 aa). Positions 86 to 98 are enriched in low complexity; it reads TNSTSDKTSSSLK. Over residues 106–123 the composition is skewed to acidic residues; that stretch reads SDGDLDMEGEEDTEELFD. Residues 124-133 are compositionally biased toward polar residues; that stretch reads NESQPSQRNQ. The span at 134 to 146 shows a compositional bias: basic and acidic residues; the sequence is SPKETEVEDEKVL.

As to quaternary structure, multimer. May interact with mediator complex subunit mdt-29. Widely expressed, including in pharyngeal muscle cells and body wall muscle cells.

The protein resides in the nucleus. Functionally, putative transcription factor. Positive regulator of the lin-12/Notch signaling pathway. Binds to specific DNA sequences in regulatory elements. Involved in cell fate decisions that require cell-cell interactions, such as the anchor cell (AC) / ventral uterine (VU) precursor cell fate decision. Heterochronic protein which controls the choice of stage specific cell fates, including the larval L3 stage-specific fate of seam cells. Involved in regulating the temporal expression pattern of hunchback-like protein hbl-1, thereby playing a role in the progression between larval stages L2 and L3. In Caenorhabditis elegans, this protein is Putative transcription factor sel-7.